Consider the following 583-residue polypeptide: MTTKVAANSAAYEAIVRAGPRVKQLQQVHAHLIVTGYGRSRSLLTKLITLACSARAIAYTHLLFLSVPLPDDFLFNSVIKSTSKLRLPLHCVAYYRRMLSSNVSPSNYTFTSVIKSCADLSALRIGKGVHCHAVVSGFGLDTYVQAALVTFYSKCGDMEGARQVFDRMPEKSIVAWNSLVSGFEQNGLADEAIQVFYQMRESGFEPDSATFVSLLSACAQTGAVSLGSWVHQYIISEGLDLNVKLGTALINLYSRCGDVGKAREVFDKMKETNVAAWTAMISAYGTHGYGQQAVELFNKMEDDCGPIPNNVTFVAVLSACAHAGLVEEGRSVYKRMTKSYRLIPGVEHHVCMVDMLGRAGFLDEAYKFIHQLDATGKATAPALWTAMLGACKMHRNYDLGVEIAKRLIALEPDNPGHHVMLSNIYALSGKTDEVSHIRDGMMRNNLRKQVGYSVIEVENKTYMFSMGDESHQETGEIYRYLETLISRCKEIGYAPVSEEVMHQVEEEEKEFALRYHSEKLAVAFGLLKTVDVAITIVKNLRICEDCHSAFKYISIVSNRQITVRDKLRFHHFQNGSCSCLDYW.

PPR repeat units lie at residues 71-105, 106-140, 141-171, 172-206, 207-241, 242-276, 277-303, 309-339, and 345-379; these read DDFL…NVSP, SNYT…GFGL, DTYV…MPEK, SIVA…GFEP, DSAT…GLDL, NVKL…NVAA, WTAM…MEDD, NNVT…MTKS, and GVEH…GKAT. Residues 383 to 458 form a type E motif region; that stretch reads LWTAMLGACK…QVGYSVIEVE (76 aa). The tract at residues 459 to 489 is type E(+) motif; that stretch reads NKTYMFSMGDESHQETGEIYRYLETLISRCK. Positions 490-583 are type DYW motif; sequence EIGYAPVSEE…NGSCSCLDYW (94 aa).

This sequence belongs to the PPR family. PCMP-H subfamily.

In Arabidopsis thaliana (Mouse-ear cress), this protein is Pentatricopeptide repeat-containing protein At2g33760 (PCMP-H6).